The following is a 743-amino-acid chain: UvrABC system protein C (743 aa).

A GIY-YIG domain is found at 16 to 95 (VDPGVYKFRD…IKEFDPRFNV (80 aa)). A UVR domain is found at 208–243 (DKLVRQLEARMQQASEELDFETAARLRDDVGALRRA). 2 disordered regions span residues 497–543 (AEAA…QTGR) and 694–743 (PSAD…TGVE). Residues 506–520 (QASDTDGDQVSDTDG) show a composition bias toward acidic residues. Residues 734–743 (QSASQRTGVE) are compositionally biased toward polar residues.

Belongs to the UvrC family. In terms of assembly, interacts with UvrB in an incision complex.

It is found in the cytoplasm. In terms of biological role, the UvrABC repair system catalyzes the recognition and processing of DNA lesions. UvrC both incises the 5' and 3' sides of the lesion. The N-terminal half is responsible for the 3' incision and the C-terminal half is responsible for the 5' incision. This is UvrABC system protein C from Rhodococcus opacus (strain B4).